A 261-amino-acid polypeptide reads, in one-letter code: Beta cell expansion factor A (261 aa).

The first 21 residues, Met1–Ala21, serve as a signal peptide directing secretion. The interval Lys99 to Arg261 is SYLF domain.

Its subcellular location is the secreted. The protein resides in the host. Stimulates the proliferation of insulin-producing beta cells during development in gnotobiotic zebrafish and mice. BefA is a microbiome-derived protein that traffics from the host intestinal lumen to the pancreas to act directly on pancreatic islets. In pancreas, interacts directly with host beta cells and elicits their proliferation via a mechanism of increasing membrane permeabilization. Can also permeabilize bacterial cell membranes, but does not show killing of target bacteria. The sequence is that of Beta cell expansion factor A from Aeromonas veronii.